A 620-amino-acid polypeptide reads, in one-letter code: MDSHTLIQALIYLGSAALIVPIAVRLGLGSVLGYLIAGCIIGPWGLRLVTDAESILHFAEIGVVLMLFIIGLELDPQRLWKLRAAVFGGGALQMVICGGLLGLFCMLLGLRWQVAELIGMTLALSSTAIAMQAMNERNLMVTQMGRSAFAVLLFQDIAAIPLVAMIPLLATSSASTTMGAFALSALKVAGALVLVVLLGRYVTRPALRFVARSGLREVFSAVALFLVFGFGLLLEEVGLSMAMGAFLAGVLLASSEYRHALESDIEPFKGLLLGLFFIGVGMSIDFGTLLENPLRIVILLLGFLIIKIAMLWLIARPLQVPNKQRRWFAVLLGQGSEFAFVVFGAAQMANVLEPEWAKSLTLAVALSMAATPILLVILNRLEQSSTEEAREADEIDEEQPRVIIAGFGRFGQITGRLLLSSGVKMVVLDHDPDHIETLRKFGMKVFYGDATRMDLLESAGAAKAEVLINAIDDPQTNLQLTEMVKEHFPHLQIIARARDVDHYIRLRQAGVEKPERETFEGALKTGRLALESLGLGPYEARERADVFRRFNIQMVEEMAMVENDTKARAAVYKRTSAMLSEIITEDREHLSLIQRHGWQGTEEGKHTGNMADEPETKPSS.

12 helical membrane-spanning segments follow: residues 4 to 24, 26 to 46, 54 to 74, 90 to 110, 114 to 134, 149 to 169, 178 to 198, 218 to 238, 270 to 290, 294 to 314, 327 to 347, and 359 to 379; these read HTLIQALIYLGSAALIVPIAV, LGLGSVLGYLIAGCIIGPWGL, SILHFAEIGVVLMLFIIGLEL, GALQMVICGGLLGLFCMLLGL, VAELIGMTLALSSTAIAMQAM, FAVLLFQDIAAIPLVAMIPLL, MGAFALSALKVAGALVLVVLL, VFSAVALFLVFGFGLLLEEVG, GLLLGLFFIGVGMSIDFGTLL, LRIVILLLGFLIIKIAMLWLI, WFAVLLGQGSEFAFVVFGAAQ, and SLTLAVALSMAATPILLVILN. An RCK N-terminal domain is found at 399–518; the sequence is QPRVIIAGFG…AGVEKPERET (120 aa). Residues 597–620 are disordered; it reads GWQGTEEGKHTGNMADEPETKPSS.

This sequence belongs to the monovalent cation:proton antiporter 2 (CPA2) transporter (TC 2.A.37) family. KefC subfamily. Homodimer. Interacts with the regulatory subunit KefF.

The protein resides in the cell inner membrane. Pore-forming subunit of a potassium efflux system that confers protection against electrophiles. Catalyzes K(+)/H(+) antiport. The sequence is that of Glutathione-regulated potassium-efflux system protein KefC from Escherichia coli O8 (strain IAI1).